The chain runs to 1072 residues: LRR receptor-like serine/threonine-protein kinase RGI5 (1072 aa).

A signal peptide spans 1-21 (MERERSNFFFLFLFCSWVSMA). Over 22–706 (QPTLSLSSDG…NGVKSPKIVA (685 aa)) the chain is Extracellular. Cysteines 56 and 63 form a disulfide. LRR repeat units follow at residues 66–89 (DNRV…DLSS), 90–113 (LSSL…SFGK), 114–138 (LTHL…LGRL), 140–162 (TLQF…ISNL), 164–185 (ALQV…SFGS), 187–211 (VSLQ…LGFL), 212–234 (KNLT…TFGN), 235–259 (LVNL…LGLC), 260–283 (SELR…LGKL), 285–307 (KITS…ISNC), 308–331 (SSLV…LGKL), 332–355 (VWLE…LSNC), 356–379 (SSLI…IGNL), 381–402 (SLQS…SFGN), 403–427 (CTDL…LFSL), 429–451 (RLSK…VAKC), 452–475 (QSLV…IGEL), 477–499 (NLVF…ISNI), 500–523 (TVLE…LGNL), 524–546 (VNLE…SFGN), 548–571 (SYLN…IKNL), 572–595 (QKLT…LGQV), 597–619 (SLTI…TFSD), 620–642 (LTQL…VLGS), and 643–667 (LTSL…PFFK). N-linked (GlcNAc...) asparagine glycans are attached at residues N80, N97, and N102. The short motif at 171-172 (QD) is the Small peptide recognition element. N-linked (GlcNAc...) asparagine glycosylation occurs at N176. The Small peptide recognition signature appears at 193–196 (RLGG). N213 carries an N-linked (GlcNAc...) asparagine glycan. 3 consecutive short sequence motifs (small peptide recognition) follow at residues 216-221 (TLGFAA), Y244, and 266-268 (YLH). A glycan (N-linked (GlcNAc...) asparagine) is linked at N306. 2 consecutive short sequence motifs (small peptide recognition) follow at residues 314–317 (DVSA) and 336–338 (QLQ). N354 carries N-linked (GlcNAc...) asparagine glycosylation. Positions 384 to 388 (SFFLW) match the Small peptide recognition motif. N402 is a glycosylation site (N-linked (GlcNAc...) asparagine). 3 short sequence motifs (small peptide recognition) span residues 410–413 (DLSR), 432–436 (KLLLL), and 456–458 (RLR). The N-linked (GlcNAc...) asparagine glycan is linked to N498. A glycan (N-linked (GlcNAc...) asparagine) is linked at N546. Residues N650 and N655 are each glycosylated (N-linked (GlcNAc...) asparagine). A helical transmembrane segment spans residues 707 to 727 (LTAVILASITIAILAAWLLIL). At 728-1072 (RNNHLYKTSQ…SQPLIKPSSS (345 aa)) the chain is on the cytoplasmic side. Phosphothreonine is present on T764. The region spanning 772-1067 (LTDENVIGKG…EWGKTSQPLI (296 aa)) is the Protein kinase domain. Residues 778–786 (IGKGCSGIV) and K800 each bind ATP. Y851 and Y887 each carry phosphotyrosine. Catalysis depends on D900, which acts as the Proton acceptor. A Phosphoserine modification is found at S936. A phosphotyrosine mark is found at Y944 and Y951. T952 carries the phosphothreonine modification.

It belongs to the protein kinase superfamily. Ser/Thr protein kinase family. Binds to RGF1; this interaction triggers the formation of heterodimers with SERK1. Phosphorylated and ubiquitinated upon interaction with RGF1, thus leading to activation a subsequent degradation. In terms of processing, autophosphorylated. As to expression, expressed in roots and hypocotyls.

The protein resides in the membrane. The catalysed reaction is L-seryl-[protein] + ATP = O-phospho-L-seryl-[protein] + ADP + H(+). It catalyses the reaction L-threonyl-[protein] + ATP = O-phospho-L-threonyl-[protein] + ADP + H(+). In terms of biological role, together with RGI1, RGI2, RGI3 and RGI4, acts as a receptor of RGF1, a peptide hormone that maintains the postembryonic root stem cell niche by regulating the expression levels and patterns of the transcription factor PLETHORA (PLT). Links RGF1 signal with its downstream components. The protein is LRR receptor-like serine/threonine-protein kinase RGI5 of Arabidopsis thaliana (Mouse-ear cress).